The primary structure comprises 100 residues: MRLTPHEQERLLLSYAAELARRRQARGLKLNHPEAVAVITDHILEGARDGRTVAELMVSGRAVLGRADVMDGVPEMLHDVQVEATFPDGTKLVTVHHPIP.

Belongs to the urease gamma subunit family. Heterotrimer of UreA (gamma), UreB (beta) and UreC (alpha) subunits. Three heterotrimers associate to form the active enzyme.

Its subcellular location is the cytoplasm. It catalyses the reaction urea + 2 H2O + H(+) = hydrogencarbonate + 2 NH4(+). It functions in the pathway nitrogen metabolism; urea degradation; CO(2) and NH(3) from urea (urease route): step 1/1. This Mycolicibacterium vanbaalenii (strain DSM 7251 / JCM 13017 / BCRC 16820 / KCTC 9966 / NRRL B-24157 / PYR-1) (Mycobacterium vanbaalenii) protein is Urease subunit gamma.